A 64-amino-acid polypeptide reads, in one-letter code: MPKMKTHSGAKKRFKLTGTGKLKRQQANRRHYLEHKSSRLTRRLAGDKLVFKGDAKVIKKMLGV.

Residues Met1–His31 form a disordered region.

It belongs to the bacterial ribosomal protein bL35 family.

The protein is Large ribosomal subunit protein bL35 of Paenarthrobacter aurescens (strain TC1).